We begin with the raw amino-acid sequence, 420 residues long: Serine hydroxymethyltransferase (420 aa).

(6S)-5,6,7,8-tetrahydrofolate-binding positions include Leu123 and 127–129 (GHL). An N6-(pyridoxal phosphate)lysine modification is found at Lys232. 357–359 (SPF) provides a ligand contact to (6S)-5,6,7,8-tetrahydrofolate.

The protein belongs to the SHMT family. In terms of assembly, homodimer. The cofactor is pyridoxal 5'-phosphate.

The protein resides in the cytoplasm. It carries out the reaction (6R)-5,10-methylene-5,6,7,8-tetrahydrofolate + glycine + H2O = (6S)-5,6,7,8-tetrahydrofolate + L-serine. It functions in the pathway one-carbon metabolism; tetrahydrofolate interconversion. The protein operates within amino-acid biosynthesis; glycine biosynthesis; glycine from L-serine: step 1/1. Functionally, catalyzes the reversible interconversion of serine and glycine with tetrahydrofolate (THF) serving as the one-carbon carrier. This reaction serves as the major source of one-carbon groups required for the biosynthesis of purines, thymidylate, methionine, and other important biomolecules. Also exhibits THF-independent aldolase activity toward beta-hydroxyamino acids, producing glycine and aldehydes, via a retro-aldol mechanism. This Streptococcus pyogenes serotype M4 (strain MGAS10750) protein is Serine hydroxymethyltransferase.